Reading from the N-terminus, the 361-residue chain is MSGTAGTSRILRVYLDGPHGVGKSTTAEALVARCEPRRPIRSMLQEPMAYWRSTFASDAITEIYDTQHRLDSNEITAAEAGAFMTSLQLHMGTPYALLEEAMRPHVGRELAEPDDNGPLPQRRDFVLVVDRHAVASMVCYPLARFMMGCVSLRSVASLISHLPPPLPGTNLVVASLDFREHAARLRARARPGERLDLTMMAAIRNAYAMLANTSRYLLSGGDWRRDWGSLPVFKPSAFVARAAKTAYTLPLRDEPGLADTLFAALKVPEFLDARGYPRAAHAWTLDILANRIRALRVYTLDLTGPPEACAAAFRRLCAGLVLTEGSHPGALCELKRAAAAYAREMSVVGSREPTTAEVESA.

An ATP-binding site is contributed by 17 to 24; the sequence is GPHGVGKS. Glu46 functions as the Proton acceptor in the catalytic mechanism. Substrate-binding residues include Tyr64 and Gln88. Position 184 (Arg184) interacts with ATP. Arg190 serves as a coordination point for substrate.

Belongs to the herpesviridae thymidine kinase family. Homodimer.

The enzyme catalyses thymidine + ATP = dTMP + ADP + H(+). Catalyzes the transfer of the gamma-phospho group of ATP to thymidine to generate dTMP in the salvage pathway of pyrimidine synthesis. The dTMP serves as a substrate for DNA polymerase during viral DNA replication. Allows the virus to be reactivated and to grow in non-proliferative cells lacking a high concentration of phosphorylated nucleic acid precursors. This is Thymidine kinase from Saimiriine herpesvirus 1 (strain MV-5-4-PSL) (SaHV-1).